An 814-amino-acid chain; its full sequence is Putative serine/threonine-protein kinase-like protein CCR3 (814 aa).

The first 30 residues, 1–30, serve as a signal peptide directing secretion; that stretch reads MKRFINSTVTFSVTVTIAVIIFFLLSPVTS. Residues N6, N68, N136, N215, N226, N251, N260, N275, N299, and N309 are each glycosylated (N-linked (GlcNAc...) asparagine). At 31–393 the chain is on the extracellular side; that stretch reads LGSGSTYAVV…SSPPSKALTR (363 aa). Pro residues predominate over residues 366-381; sequence SQFPLPPPPPPPPPSP. The disordered stretch occupies residues 366–388; that stretch reads SQFPLPPPPPPPPPSPSTSSPPS. Residues 394–414 form a helical membrane-spanning segment; the sequence is GLLAFAIVGSVGAFAGICSVV. Topologically, residues 415–814 are cytoplasmic; sequence YCLWTGVCLG…SSGICSIVSD (400 aa). Residues 433 to 478 are disordered; the sequence is QPTITRGGSNSRSNSSNSRSLSIRRQGSRMLSMRRQRSGTSSMKHA. A compositionally biased stretch (low complexity) spans 441–457; that stretch reads SNSRSNSSNSRSLSIRR. Residues 496–794 enclose the Protein kinase domain; the sequence is FSLENKIGSG…DIVGNLERAL (299 aa). ATP is bound by residues 502 to 510 and K524; that span reads IGSGSFGVV. Catalysis depends on D631, which acts as the Proton acceptor.

Belongs to the protein kinase superfamily. Ser/Thr protein kinase family. Homodimer. As to expression, expressed in roots, leaves, shoot apical meristems (SAM), and floral buds.

The protein localises to the membrane. The enzyme catalyses L-seryl-[protein] + ATP = O-phospho-L-seryl-[protein] + ADP + H(+). It carries out the reaction L-threonyl-[protein] + ATP = O-phospho-L-threonyl-[protein] + ADP + H(+). Functionally, serine/threonine-protein kinase. The protein is Putative serine/threonine-protein kinase-like protein CCR3 (CCR3) of Arabidopsis thaliana (Mouse-ear cress).